The sequence spans 223 residues: Voltage-dependent calcium channel gamma-1 subunit (223 aa).

At 1–10 (MSQTKTAKVR) the chain is on the cytoplasmic side. The helical transmembrane segment at 11 to 29 (VTLFFILAGGVLAMVAVVT) threads the bilayer. Over 30–109 (DHWAVLSPHL…TQKEYSISAA (80 aa)) the chain is Extracellular. N-linked (GlcNAc...) asparagine glycans are attached at residues Asn43 and Asn80. Residues Cys57 and Cys81 are joined by a disulfide bond. A helical membrane pass occupies residues 110–130 (AIAIFSLGFIIIGSICAFLSF). Topologically, residues 131–135 (GNKRD) are cytoplasmic. Residues 136-156 (YLLRPASMFYAFAGLCLIVSV) form a helical membrane-spanning segment. Over 157 to 180 (EVMRQSVKRMIDSEDTVWIEYYYS) the chain is Extracellular. A helical membrane pass occupies residues 181–205 (WSFACACAGFTLLFLGGLFLLLFSL). At 206–223 (PRMPQNPWESCMDTESEH) the chain is on the cytoplasmic side.

The protein belongs to the PMP-22/EMP/MP20 family. CACNG subfamily. Component of a calcium channel complex consisting of a pore-forming alpha subunit (CACNA1S) and the ancillary subunits CACNB1 or CACNB2, CACNG1 and CACNA2D1. The channel complex contains alpha, beta, gamma and delta subunits in a 1:1:1:1 ratio, i.e. it contains either CACNB1 or CACNB2. Post-translationally, N-glycosylated. Skeletal muscle.

Its subcellular location is the cell membrane. The protein resides in the sarcolemma. Its function is as follows. Regulatory subunit of the voltage-gated calcium channel that gives rise to L-type calcium currents in skeletal muscle. Regulates channel inactivation kinetics. This chain is Voltage-dependent calcium channel gamma-1 subunit (Cacng1), found in Rattus norvegicus (Rat).